Consider the following 367-residue polypeptide: Cell division protein FtsZ (367 aa).

GTP is bound by residues 17 to 21, 104 to 106, Glu-135, Lys-139, and Asp-183; these read GGGSN and GTG.

The protein belongs to the FtsZ family. As to quaternary structure, homodimer. Polymerizes to form a dynamic ring structure in a strictly GTP-dependent manner. Interacts directly with several other division proteins.

The protein localises to the cytoplasm. Functionally, essential cell division protein that forms a contractile ring structure (Z ring) at the future cell division site. The regulation of the ring assembly controls the timing and the location of cell division. One of the functions of the FtsZ ring is to recruit other cell division proteins to the septum to produce a new cell wall between the dividing cells. Binds GTP and shows GTPase activity. The chain is Cell division protein FtsZ from Aquifex aeolicus (strain VF5).